The following is a 28-amino-acid chain: Conotoxin Cl9b (28 aa).

4-hydroxyproline occurs at positions 17 and 28.

In terms of processing, contains 3 disulfide bonds. In terms of tissue distribution, expressed by the venom duct.

The protein resides in the secreted. This Californiconus californicus (California cone) protein is Conotoxin Cl9b.